The primary structure comprises 288 residues: ATP synthase gamma chain (288 aa).

It belongs to the ATPase gamma chain family. In terms of assembly, F-type ATPases have 2 components, CF(1) - the catalytic core - and CF(0) - the membrane proton channel. CF(1) has five subunits: alpha(3), beta(3), gamma(1), delta(1), epsilon(1). CF(0) has three main subunits: a, b and c.

The protein resides in the cell inner membrane. Functionally, produces ATP from ADP in the presence of a proton gradient across the membrane. The gamma chain is believed to be important in regulating ATPase activity and the flow of protons through the CF(0) complex. In Rickettsia bellii (strain RML369-C), this protein is ATP synthase gamma chain.